Reading from the N-terminus, the 946-residue chain is Bifunctional glutamine synthetase adenylyltransferase/adenylyl-removing enzyme (946 aa).

An adenylyl removase region spans residues 1–440 (MKPLSSPLQQ…VFNELIGDDE (440 aa)). The tract at residues 449-946 (SEQWRELWQD…ASWQKWLVEE (498 aa)) is adenylyl transferase.

It belongs to the GlnE family. The cofactor is Mg(2+).

The catalysed reaction is [glutamine synthetase]-O(4)-(5'-adenylyl)-L-tyrosine + phosphate = [glutamine synthetase]-L-tyrosine + ADP. It catalyses the reaction [glutamine synthetase]-L-tyrosine + ATP = [glutamine synthetase]-O(4)-(5'-adenylyl)-L-tyrosine + diphosphate. Its function is as follows. Involved in the regulation of glutamine synthetase GlnA, a key enzyme in the process to assimilate ammonia. When cellular nitrogen levels are high, the C-terminal adenylyl transferase (AT) inactivates GlnA by covalent transfer of an adenylyl group from ATP to specific tyrosine residue of GlnA, thus reducing its activity. Conversely, when nitrogen levels are low, the N-terminal adenylyl removase (AR) activates GlnA by removing the adenylyl group by phosphorolysis, increasing its activity. The regulatory region of GlnE binds the signal transduction protein PII (GlnB) which indicates the nitrogen status of the cell. This Escherichia coli O8 (strain IAI1) protein is Bifunctional glutamine synthetase adenylyltransferase/adenylyl-removing enzyme.